The primary structure comprises 131 residues: Large-conductance mechanosensitive channel (131 aa).

3 helical membrane passes run 8-28 (FAIR…GAFG), 30-50 (IVSS…LGGI), and 67-87 (GAFI…FLFV).

It belongs to the MscL family. In terms of assembly, homopentamer.

The protein localises to the cell membrane. Channel that opens in response to stretch forces in the membrane lipid bilayer. May participate in the regulation of osmotic pressure changes within the cell. This is Large-conductance mechanosensitive channel from Geobacillus kaustophilus (strain HTA426).